Consider the following 693-residue polypeptide: Translation factor GUF1 homolog, chloroplastic (693 aa).

The transit peptide at M1–L51 directs the protein to the chloroplast. The 182-residue stretch at S86–R267 folds into the tr-type G domain. GTP contacts are provided by residues A95–S102, D160–H164, and N214–D217.

It belongs to the TRAFAC class translation factor GTPase superfamily. Classic translation factor GTPase family. LepA subfamily.

Its subcellular location is the plastid. The protein localises to the chloroplast. The enzyme catalyses GTP + H2O = GDP + phosphate + H(+). Its function is as follows. Promotes chloroplast protein synthesis. May act as a fidelity factor of the translation reaction, by catalyzing a one-codon backward translocation of tRNAs on improperly translocated ribosomes. The polypeptide is Translation factor GUF1 homolog, chloroplastic (Ricinus communis (Castor bean)).